Here is an 85-residue protein sequence, read N- to C-terminus: Large ribosomal subunit protein bL27 (85 aa).

Residues 1 to 27 (MAHKKAGGSTKNGRDSQSKRLGVKRYG) are disordered.

It belongs to the bacterial ribosomal protein bL27 family.

The chain is Large ribosomal subunit protein bL27 from Halorhodospira halophila (strain DSM 244 / SL1) (Ectothiorhodospira halophila (strain DSM 244 / SL1)).